We begin with the raw amino-acid sequence, 221 residues long: uncharacterized protein (221 aa).

Transmembrane regions (helical) follow at residues 30–50 (FGIF…LPLA), 62–82 (AGVV…LYWI), 144–164 (VWVF…VYVY), and 179–199 (ILDQ…LLYL).

The protein belongs to the DedA family.

The protein resides in the cell membrane. This is an uncharacterized protein from Bacillus subtilis (strain 168).